The chain runs to 174 residues: Large ribosomal subunit protein uL10 (174 aa).

Belongs to the universal ribosomal protein uL10 family. As to quaternary structure, part of the ribosomal stalk of the 50S ribosomal subunit. The N-terminus interacts with L11 and the large rRNA to form the base of the stalk. The C-terminus forms an elongated spine to which L12 dimers bind in a sequential fashion forming a multimeric L10(L12)X complex.

Functionally, forms part of the ribosomal stalk, playing a central role in the interaction of the ribosome with GTP-bound translation factors. The sequence is that of Large ribosomal subunit protein uL10 from Geobacter metallireducens (strain ATCC 53774 / DSM 7210 / GS-15).